A 301-amino-acid polypeptide reads, in one-letter code: Rhodopsin (301 aa).

The Extracellular segment spans residues 1-18 (LHMIHLHWYQYPPMNPMM). A helical membrane pass occupies residues 19-43 (YPLLLIFMLFTGILCLAGNFVTIWV). Residues 44–55 (FMNTKSLRTPAN) are Cytoplasmic-facing. A helical membrane pass occupies residues 56–78 (LLVVNLAMSDFLMMFTMFPPMMV). The Extracellular portion of the chain corresponds to 79–92 (TCYYHTWTLGPTFC). Cys92 and Cys169 are oxidised to a cystine. A helical membrane pass occupies residues 93-115 (QVYAFLGNLCGCASIWTMVFITF). A 'Ionic lock' involved in activated form stabilization motif is present at residues 116-118 (DRY). At 116 to 134 (DRYNVIVKGVAGEPLSTKK) the chain is on the cytoplasmic side. A helical transmembrane segment spans residues 135-155 (ASLWILTIWVLSTTWCIAPFF). The Extracellular segment spans residues 156-182 (GWNHYVPEGNLTGCGTDYLSEDILSRS). N-linked (GlcNAc...) asparagine glycosylation occurs at Asn165. The chain crosses the membrane as a helical span at residues 183-204 (YLYVYSTWVYFLPLAITIYCYV). The Cytoplasmic segment spans residues 205 to 245 (FIIKAVAAHEKGMRDQAKKMGIKSLRNEEAQKTSAECRLAK). Residues 246-267 (IAMTTVALWFIAWTPCLLINWV) traverse the membrane as a helical segment. The Extracellular segment spans residues 268-278 (GMFARSYLSPV). Residues 279 to 300 (YTIWGYVFAKANAVYNPIVYAI) traverse the membrane as a helical segment. Lys288 is subject to N6-(retinylidene)lysine.

It belongs to the G-protein coupled receptor 1 family. Opsin subfamily. Homodimer. Interacts with GNAQ. Post-translationally, contains one covalently linked retinal chromophore.

Its subcellular location is the cell projection. It is found in the rhabdomere membrane. Its function is as follows. Photoreceptor required for image-forming vision at low light intensity. Can use both retinal and 3-dehydroretinal as visual pigment. Light-induced isomerization of 11-cis to all-trans retinal triggers a conformational change that activates signaling via G-proteins. Signaling via GNAQ probably mediates the activation of phospholipase C. The polypeptide is Rhodopsin (RHO) (Procambarus seminolae (Crayfish)).